Here is a 127-residue protein sequence, read N- to C-terminus: UPF0212 protein VNG_1264C (127 aa).

Belongs to the UPF0212 family.

In Halobacterium salinarum (strain ATCC 700922 / JCM 11081 / NRC-1) (Halobacterium halobium), this protein is UPF0212 protein VNG_1264C.